We begin with the raw amino-acid sequence, 160 residues long: Putative pre-16S rRNA nuclease (160 aa).

Belongs to the YqgF nuclease family.

The protein localises to the cytoplasm. Could be a nuclease involved in processing of the 5'-end of pre-16S rRNA. This Cutibacterium acnes (strain DSM 16379 / KPA171202) (Propionibacterium acnes) protein is Putative pre-16S rRNA nuclease.